Here is a 407-residue protein sequence, read N- to C-terminus: Large ribosomal subunit protein uL3-like (407 aa).

Residues 1-31 (MSHRKFSAPRHGHLGFLPHKRSHRHRGKVKT) are compositionally biased toward basic residues. 2 disordered regions span residues 1–35 (MSHR…WPRD) and 383–407 (QEKR…SGDL). The segment covering 394–407 (KHLEKEKPETSGDL) has biased composition (basic and acidic residues).

The protein belongs to the universal ribosomal protein uL3 family. Component of the large ribosomal subunit in striated muscle cells.

Functionally, heart- and skeletal muscle-specific component of the ribosome, which regulates muscle function. Component of the large ribosomal subunit in striated muscle cells: replaces the RPL3 paralog in the ribosome in these cells. The ribosome is a large ribonucleoprotein complex responsible for the synthesis of proteins in the cell. Inhibits myotube growth and muscle function. In Bos taurus (Bovine), this protein is Large ribosomal subunit protein uL3-like (RPL3L).